The chain runs to 509 residues: Photosystem II CP47 reaction center protein (509 aa).

6 helical membrane-spanning segments follow: residues 21 to 36 (SVHL…WAGS), 101 to 115 (IVLS…VWHW), 140 to 156 (GIHL…FGAF), 203 to 218 (IAAG…FHLT), 237 to 252 (VLSS…AFVV), and 457 to 472 (VFAL…HGAR).

It belongs to the PsbB/PsbC family. PsbB subfamily. PSII is composed of 1 copy each of membrane proteins PsbA, PsbB, PsbC, PsbD, PsbE, PsbF, PsbH, PsbI, PsbJ, PsbK, PsbL, PsbM, PsbT, PsbX, PsbY, PsbZ, Psb30/Ycf12, peripheral proteins PsbO, CyanoQ (PsbQ), PsbU, PsbV and a large number of cofactors. It forms dimeric complexes. It depends on Binds multiple chlorophylls. PSII binds additional chlorophylls, carotenoids and specific lipids. as a cofactor.

The protein resides in the cellular thylakoid membrane. One of the components of the core complex of photosystem II (PSII). It binds chlorophyll and helps catalyze the primary light-induced photochemical processes of PSII. PSII is a light-driven water:plastoquinone oxidoreductase, using light energy to abstract electrons from H(2)O, generating O(2) and a proton gradient subsequently used for ATP formation. In Nostoc sp. (strain PCC 7120 / SAG 25.82 / UTEX 2576), this protein is Photosystem II CP47 reaction center protein.